We begin with the raw amino-acid sequence, 551 residues long: C6 finger transcription factor imqK (551 aa).

A DNA-binding region (zn(2)-C6 fungal-type) is located at residues 11 to 53 (CDRCRGQKLRCVRLPGPAREDSPRSARSVNQPCERCKRAKVVC). 2 disordered regions span residues 280–302 (RQGMSAASDPNYPASGLGETSPS) and 351–378 (NEYSSSRSQSRNHSTSASSRSKDGRISA). Low complexity predominate over residues 351 to 369 (NEYSSSRSQSRNHSTSASS).

The protein resides in the nucleus. In terms of biological role, C6 finger transcription factor that positively regulates the cluster that mediates the biosynthesis of imizoquins A to D, tripeptide-derived alkaloids that serve a protective role against oxidative stress that are essential for normal germination. This chain is C6 finger transcription factor imqK, found in Aspergillus flavus (strain ATCC 200026 / FGSC A1120 / IAM 13836 / NRRL 3357 / JCM 12722 / SRRC 167).